A 122-amino-acid polypeptide reads, in one-letter code: Small ribosomal subunit protein uS13 (122 aa).

A disordered region spans residues 98 to 122; it reads VRGQRTHTNARTRKGPAKAIAGKKK.

It belongs to the universal ribosomal protein uS13 family. Part of the 30S ribosomal subunit. Forms a loose heterodimer with protein S19. Forms two bridges to the 50S subunit in the 70S ribosome.

Located at the top of the head of the 30S subunit, it contacts several helices of the 16S rRNA. In the 70S ribosome it contacts the 23S rRNA (bridge B1a) and protein L5 of the 50S subunit (bridge B1b), connecting the 2 subunits; these bridges are implicated in subunit movement. Contacts the tRNAs in the A and P-sites. The chain is Small ribosomal subunit protein uS13 from Ruegeria pomeroyi (strain ATCC 700808 / DSM 15171 / DSS-3) (Silicibacter pomeroyi).